The chain runs to 509 residues: Protein OS-9 homolog (509 aa).

A signal peptide spans 1–23; it reads MRRQSRIVASLLVLACASSGAFA. Residues 64–74 show a composition bias toward polar residues; sequence SPDLNDISEQT. Residues 64-91 form a disordered region; sequence SPDLNDISEQTPLKDESEESIRDGSSGE. Residues 75–91 show a composition bias toward basic and acidic residues; sequence PLKDESEESIRDGSSGE. A glycan (N-linked (GlcNAc...) asparagine) is linked at Asn120. An MRH domain is found at 151 to 291; that stretch reads GKCLYYISGW…LIYTPRLCND (141 aa). Cys153 and Cys166 are oxidised to a cystine. The a mannooligosaccharide derivative site is built by Trp160, Trp161, Gln173, Asp246, Arg252, Glu273, and Tyr279. 2 disulfides stabilise this stretch: Cys245/Cys277 and Cys260/Cys289. The disordered stretch occupies residues 433–509; the sequence is GVVDTDEDEE…GSEEIFKDEL (77 aa). The segment covering 436–451 has biased composition (acidic residues); that stretch reads DTDEDEEDGYENEEGE. Residues 452–461 are compositionally biased toward basic and acidic residues; that stretch reads TDKREQRENT. The span at 489-502 shows a compositional bias: acidic residues; it reads RSEDGEDPDVDGSE. The Prevents secretion from ER signature appears at 506 to 509; that stretch reads KDEL.

The protein belongs to the OS-9 family. Interacts with missfolded ER lumenal proteins.

It localises to the endoplasmic reticulum membrane. Functionally, lectin involved in the quality control of the secretory pathway. As a member of the endoplasmic reticulum-associated degradation lumenal (ERAD-L) surveillance system, targets misfolded endoplasmic reticulum lumenal glycoproteins for degradation. The protein is Protein OS-9 homolog (yos9) of Emericella nidulans (strain FGSC A4 / ATCC 38163 / CBS 112.46 / NRRL 194 / M139) (Aspergillus nidulans).